Here is a 147-residue protein sequence, read N- to C-terminus: Transthyretin (147 aa).

A signal peptide spans 1-20 (MASRRLLLLCLAGLVLVTEA). A Sulfocysteine modification is found at Cys-30. Lys-35 provides a ligand contact to L-thyroxine. Residue Glu-62 is modified to 4-carboxyglutamate. L-thyroxine is bound at residue Glu-74. Asn-118 carries an N-linked (GlcNAc...) asparagine glycan. Ser-137 provides a ligand contact to L-thyroxine.

The protein belongs to the transthyretin family. As to quaternary structure, homotetramer. Dimer of dimers. In the homotetramer, subunits assemble around a central channel that can accommodate two ligand molecules. Interacts with RBP4. Post-translationally, sulfonation of the reactive cysteine Cys-30 enhances the stability of the native conformation of TTR, avoiding misassembly of the protein leading to amyloid formation. As to expression, detected in serum (at protein level). Detected in liver.

It localises to the secreted. Functionally, thyroid hormone-binding protein. Probably transports thyroxine from the bloodstream to the brain. The sequence is that of Transthyretin (TTR) from Sorex araneus (Eurasian common shrew).